We begin with the raw amino-acid sequence, 443 residues long: Glutamyl-tRNA reductase (443 aa).

Substrate-binding positions include Thr-49 to Arg-52, Ser-109, Glu-114 to Gln-116, and Gln-120. Catalysis depends on Cys-50, which acts as the Nucleophile. Gly-189–Cys-194 contributes to the NADP(+) binding site. Residues Pro-421–Ser-443 form a disordered region. A compositionally biased stretch (basic and acidic residues) spans Ser-430 to Ser-443.

Belongs to the glutamyl-tRNA reductase family. As to quaternary structure, homodimer.

It catalyses the reaction (S)-4-amino-5-oxopentanoate + tRNA(Glu) + NADP(+) = L-glutamyl-tRNA(Glu) + NADPH + H(+). Its pathway is porphyrin-containing compound metabolism; protoporphyrin-IX biosynthesis; 5-aminolevulinate from L-glutamyl-tRNA(Glu): step 1/2. In terms of biological role, catalyzes the NADPH-dependent reduction of glutamyl-tRNA(Glu) to glutamate 1-semialdehyde (GSA). The chain is Glutamyl-tRNA reductase from Syntrophotalea carbinolica (strain DSM 2380 / NBRC 103641 / GraBd1) (Pelobacter carbinolicus).